A 141-amino-acid polypeptide reads, in one-letter code: Hemoglobin subunit alpha (141 aa).

The region spanning 1 to 141 (VLSPADKTNV…VSTVLTSKYR (141 aa)) is the Globin domain. At Ser-3 the chain carries Phosphoserine. An N6-succinyllysine modification is found at Lys-7. Phosphothreonine is present on Thr-8. Lys-11 carries the post-translational modification N6-succinyllysine. Lys-16 is modified (N6-acetyllysine; alternate). Lys-16 bears the N6-succinyllysine; alternate mark. A Phosphotyrosine modification is found at Tyr-24. The residue at position 35 (Ser-35) is a Phosphoserine. N6-succinyllysine is present on Lys-40. Ser-49 carries the phosphoserine modification. His-58 provides a ligand contact to O2. Residue His-87 coordinates heme b. Ser-102 carries the post-translational modification Phosphoserine. At Thr-108 the chain carries Phosphothreonine. Residues Ser-124 and Ser-131 each carry the phosphoserine modification. A phosphothreonine mark is found at Thr-134 and Thr-137. Residue Ser-138 is modified to Phosphoserine.

The protein belongs to the globin family. As to quaternary structure, heterotetramer of two alpha chains and two beta chains. Red blood cells.

Involved in oxygen transport from the lung to the various peripheral tissues. In terms of biological role, hemopressin acts as an antagonist peptide of the cannabinoid receptor CNR1. Hemopressin-binding efficiently blocks cannabinoid receptor CNR1 and subsequent signaling. This Taphozous georgianus (Sharp-nosed tomb bat) protein is Hemoglobin subunit alpha (HBA).